The primary structure comprises 764 residues: Ribosomal protein S6 kinase alpha-6 (764 aa).

The segment at 1–24 (MLPFAPVEDPWDQEDMEVFGSTSS) is disordered. The 258-residue stretch at 93–350 (FDLLKVLGQG…VEEVKRHAFF (258 aa)) folds into the Protein kinase 1 domain. ATP is bound by residues 99 to 107 (LGQGSFGKV) and K125. Residue D218 is the Proton acceptor of the active site. S252, S392, and S409 each carry phosphoserine. Residues 351–420 (ASIDWNKLYK…VATSIAEEYK (70 aa)) form the AGC-kinase C-terminal domain. The region spanning 446–706 (YELKEDIGIG…VLKHPWITQR (261 aa)) is the Protein kinase 2 domain. Residues 452–460 (IGIGSYSVC) and K475 each bind ATP. The active-site Proton acceptor is D563. The residue at position 601 (T601) is a Phosphothreonine.

The protein belongs to the protein kinase superfamily. AGC Ser/Thr protein kinase family. S6 kinase subfamily. As to quaternary structure, forms a complex with MAPK3/ERK1 but not with MAPK9 or MAPK14 in serum-starved cells. It depends on Mg(2+) as a cofactor. Post-translationally, phosphorylated at Ser-252, Ser-392, and Ser-409 in serum-starved cells.

It localises to the cytoplasm. Its subcellular location is the cytosol. The protein resides in the nucleus. It catalyses the reaction L-seryl-[protein] + ATP = O-phospho-L-seryl-[protein] + ADP + H(+). The catalysed reaction is L-threonyl-[protein] + ATP = O-phospho-L-threonyl-[protein] + ADP + H(+). Constitutively activated by phosphorylation at Ser-252, Ser-392, and Ser-409 in serum-starved cells. Does not require growth factor stimulation for significant kinase activity. Functionally, constitutively active serine/threonine-protein kinase that exhibits growth-factor-independent kinase activity and that may participate in p53/TP53-dependent cell growth arrest signaling and play an inhibitory role during embryogenesis. The chain is Ribosomal protein S6 kinase alpha-6 (Rps6ka6) from Mus musculus (Mouse).